The chain runs to 101 residues: Protein RALF-like 14 (101 aa).

An N-terminal signal peptide occupies residues 1 to 21 (MKLLIFAVIISVVLFPVLVSS). A propeptide spans 22 to 56 (RTIKCDQLSGKCINGEEKEIMNMRLGLDVSSRRIL) (removed in mature form). A disulfide bridge connects residues C90 and C96.

The protein belongs to the plant rapid alkalinization factor (RALF) family. Proteolytically cleaved, probably by S1P, a subtilisin-like serine protease (subtilase).

Its subcellular location is the secreted. Cell signaling peptide that may regulate plant stress, growth, and development. Mediates a rapid alkalinization of extracellular space by mediating a transient increase in the cytoplasmic Ca(2+) concentration leading to a calcium-dependent signaling events through a cell surface receptor and a concomitant activation of some intracellular mitogen-activated protein kinases. The chain is Protein RALF-like 14 (RALFL14) from Arabidopsis thaliana (Mouse-ear cress).